We begin with the raw amino-acid sequence, 347 residues long: GMP reductase (347 aa).

An NADP(+)-binding site is contributed by 108-131 (ADFEKTKQILDLNPALNFVCIDVA). Positions 181 and 183 each coordinate K(+). Catalysis depends on C186, which acts as the Thioimidate intermediate. Position 216-239 (216-239 (IVSDGGCTTPGDVAKAFGGGADFV)) interacts with NADP(+).

This sequence belongs to the IMPDH/GMPR family. GuaC type 1 subfamily. Homotetramer.

The enzyme catalyses IMP + NH4(+) + NADP(+) = GMP + NADPH + 2 H(+). Catalyzes the irreversible NADPH-dependent deamination of GMP to IMP. It functions in the conversion of nucleobase, nucleoside and nucleotide derivatives of G to A nucleotides, and in maintaining the intracellular balance of A and G nucleotides. The chain is GMP reductase from Shigella flexneri serotype 5b (strain 8401).